A 274-amino-acid polypeptide reads, in one-letter code: Penicillin-insensitive murein endopeptidase (274 aa).

The first 19 residues, 1 to 19 (MKKTAIALLAWFVSSASLA), serve as a signal peptide directing secretion. Intrachain disulfides connect Cys44–Cys265, Cys187–Cys235, and Cys216–Cys223. Residues His110, His113, Asp120, Asp147, His150, and His211 each coordinate Zn(2+). Residues 225–274 (DQPLPPPGDGCGAELQSWFEPPKPGTTKPEKKTPPPLPPSCQALLDEHVL) form a disordered region.

This sequence belongs to the peptidase M74 family. As to quaternary structure, dimer. Requires Zn(2+) as cofactor.

The protein resides in the periplasm. Functionally, murein endopeptidase that cleaves the D-alanyl-meso-2,6-diamino-pimelyl amide bond that connects peptidoglycan strands. Likely plays a role in the removal of murein from the sacculus. The sequence is that of Penicillin-insensitive murein endopeptidase from Salmonella agona (strain SL483).